The following is a 344-amino-acid chain: Protein POLAR LOCALIZATION DURING ASYMMETRIC DIVISION AND REDISTRIBUTION (344 aa).

Phosphothreonine; by ASK7 is present on T19. Residue S79 is modified to Phosphoserine; by ASK7. 2 positions are modified to phosphothreonine; by ASK7: T84 and T86. Residues S91 and S94 each carry the phosphoserine; by ASK7 modification. Phosphothreonine; by ASK7 is present on residues T193, T217, and T233. S235 is modified (phosphoserine; by ASK7). Residues L262–A297 adopt a coiled-coil conformation. 5 positions are modified to phosphoserine; by ASK7: S308, S309, S320, S321, and S336.

In terms of assembly, component of a complex made of POLAR, BASL, ASK7/BIN2 and ASK3/SK12. Interacts with BASL, ASK7/BIN2 and ASK3/SK12. Phosphorylation by ASK7/BIN2 is increases turnover. Expressed in stomatal lineage cells with asymmetric division potential.

The protein resides in the cytoplasm. Its subcellular location is the cell cortex. Its function is as follows. Regulates asymmetric cell division (ACD), especially in stomatal-lineage cells. Acts as a stomatal lineage scaffold which regulates subcellular localization and transient polarization of kinases (e.g. ASK7/BIN2 and ASK3/SK12) involved in ACD in a BASL-dependent manner. Promotes the differentiation of both pavement cells and stomata. The polypeptide is Protein POLAR LOCALIZATION DURING ASYMMETRIC DIVISION AND REDISTRIBUTION (Arabidopsis thaliana (Mouse-ear cress)).